The primary structure comprises 155 residues: Small ribosomal subunit protein uS9 (155 aa).

It belongs to the universal ribosomal protein uS9 family.

This is Small ribosomal subunit protein uS9 from Rhizobium meliloti (strain 1021) (Ensifer meliloti).